Here is a 373-residue protein sequence, read N- to C-terminus: UDP-glucose 4-epimerase 3 (373 aa).

27 to 58 (SVLVTGGAGYIGTHTVLRLLEKGFAVTVVDNF) is a binding site for NAD(+). Serine 153 provides a ligand contact to substrate. Tyrosine 177 acts as the Proton acceptor in catalysis.

The protein belongs to the NAD(P)-dependent epimerase/dehydratase family. The cofactor is NAD(+).

The enzyme catalyses UDP-alpha-D-glucose = UDP-alpha-D-galactose. It participates in carbohydrate metabolism; galactose metabolism. Catalyzes the interconversion between UDP-glucose and UDP-galactose. In Oryza sativa subsp. japonica (Rice), this protein is UDP-glucose 4-epimerase 3 (UGE-3).